The chain runs to 183 residues: ATP-dependent protease subunit HslV (183 aa).

Residue Thr13 is part of the active site. Na(+)-binding residues include Gly168, Cys171, and Thr174.

The protein belongs to the peptidase T1B family. HslV subfamily. In terms of assembly, a double ring-shaped homohexamer of HslV is capped on each side by a ring-shaped HslU homohexamer. The assembly of the HslU/HslV complex is dependent on binding of ATP.

Its subcellular location is the cytoplasm. It catalyses the reaction ATP-dependent cleavage of peptide bonds with broad specificity.. Its activity is regulated as follows. Allosterically activated by HslU binding. Its function is as follows. Protease subunit of a proteasome-like degradation complex believed to be a general protein degrading machinery. The protein is ATP-dependent protease subunit HslV of Xylella fastidiosa (strain M23).